The following is a 638-amino-acid chain: SUMO-activating enzyme subunit 2 (638 aa).

ATP-binding positions include 24-29 (GAGGIG), Asp-48, 56-59 (NLNR), Lys-72, 95-96 (SI), and 117-122 (DNRAAR). Residues Cys-158 and Cys-161 each coordinate Zn(2+). Residue Lys-164 forms a Glycyl lysine isopeptide (Lys-Gly) (interchain with G-Cter in SUMO1) linkage. The active-site Glycyl thioester intermediate is Cys-173. Lys-190 is covalently cross-linked (Glycyl lysine isopeptide (Lys-Gly) (interchain with G-Cter in SUMO)). The tract at residues 202-233 (ADQEVSPDRADPEAAWEPTEAEARARASNEDG) is disordered. Ser-207 carries the post-translational modification Phosphoserine. The segment covering 222-233 (AEARARASNEDG) has biased composition (basic and acidic residues). Lys-236 is covalently cross-linked (Glycyl lysine isopeptide (Lys-Gly) (interchain with G-Cter in SUMO1); alternate). Glycyl lysine isopeptide (Lys-Gly) (interchain with G-Cter in SUMO2); alternate cross-links involve residues Lys-236 and Lys-257. Glycyl lysine isopeptide (Lys-Gly) (interchain with G-Cter in SUMO); alternate cross-links involve residues Lys-257 and Lys-271. Residue Lys-271 is modified to N6-acetyllysine; alternate. A Glycyl lysine isopeptide (Lys-Gly) (interchain with G-Cter in SUMO) cross-link involves residue Lys-275. Residue Lys-369 forms a Glycyl lysine isopeptide (Lys-Gly) (interchain with G-Cter in SUMO2) linkage. Lys-418 is covalently cross-linked (Glycyl lysine isopeptide (Lys-Gly) (interchain with G-Cter in SUMO1); alternate). Lys-418 is covalently cross-linked (Glycyl lysine isopeptide (Lys-Gly) (interchain with G-Cter in SUMO2); alternate). Zn(2+) is bound by residues Cys-439 and Cys-442. The residue at position 505 (Ser-505) is a Phosphoserine. Lys-538 is covalently cross-linked (Glycyl lysine isopeptide (Lys-Gly) (interchain with G-Cter in SUMO2)). Phosphoserine is present on residues Ser-548 and Ser-590. A compositionally biased stretch (basic and acidic residues) spans 548–561 (SPEKVGPKQAEDAA). The interval 548–638 (SPEKVGPKQA…EDPDDVIALD (91 aa)) is disordered. Residues 581 to 594 (EQDDVLIVDSDEEG) show a composition bias toward acidic residues. Residues 603–614 (GDDKARKRKLEE) show a composition bias toward basic and acidic residues. A Glycyl lysine isopeptide (Lys-Gly) (interchain with G-Cter in SUMO) cross-link involves residue Lys-609. Lys-611 participates in a covalent cross-link: Glycyl lysine isopeptide (Lys-Gly) (interchain with G-Cter in SUMO); alternate. Residue Lys-611 is modified to N6-acetyllysine; alternate. A Glycyl lysine isopeptide (Lys-Gly) (interchain with G-Cter in SUMO) cross-link involves residue Lys-621. Residues 628-638 (MEDPDDVIALD) are compositionally biased toward acidic residues.

It belongs to the ubiquitin-activating E1 family. In terms of assembly, heterodimer of SAE1 and UBA2/SAE2. The heterodimer corresponds to the two domains that are encoded on a single polypeptide chain in ubiquitin-activating enzyme E1. Interacts with UBE2I. Sumoylated with SUMO1 and SUMO2/3 and by UBC9. Sumoylation at Lys-236 inhibits enzymatic activity. Sumoylation at the C-terminal lysine cluster plays an essential role in nuclear trafficking. As to expression, broadly expressed, with highest levels in testis.

Its subcellular location is the cytoplasm. It is found in the nucleus. It participates in protein modification; protein sumoylation. Its function is as follows. The heterodimer acts as an E1 ligase for SUMO1, SUMO2, SUMO3, and probably SUMO4. It mediates ATP-dependent activation of SUMO proteins followed by formation of a thioester bond between a SUMO protein and a conserved active site cysteine residue on UBA2/SAE2. The sequence is that of SUMO-activating enzyme subunit 2 (Uba2) from Mus musculus (Mouse).